Consider the following 372-residue polypeptide: Flagellar P-ring protein (372 aa).

The first 26 residues, 1–26 (MNLSSLPHRLLAAAVALCAIAAPASA), serve as a signal peptide directing secretion.

It belongs to the FlgI family. As to quaternary structure, the basal body constitutes a major portion of the flagellar organelle and consists of four rings (L,P,S, and M) mounted on a central rod.

It is found in the periplasm. It localises to the bacterial flagellum basal body. Functionally, assembles around the rod to form the L-ring and probably protects the motor/basal body from shearing forces during rotation. The protein is Flagellar P-ring protein of Xanthomonas campestris pv. campestris (strain ATCC 33913 / DSM 3586 / NCPPB 528 / LMG 568 / P 25).